The chain runs to 51 residues: uncharacterized protein (51 aa).

This is an uncharacterized protein from Saccharomyces cerevisiae (strain ATCC 204508 / S288c) (Baker's yeast).